Reading from the N-terminus, the 307-residue chain is D-alanine--D-alanine ligase (307 aa).

The ATP-grasp domain occupies 104-301; it reads RTAFLAAGLP…FVSLCRWMVE (198 aa). 130–183 provides a ligand contact to ATP; sequence PLPRPFVIKPANEGSAVGVHILHEGDNRRTEIARSWSFGGQALVEEYIPGRELT. Residues Asp251, Glu268, and Asn270 each coordinate Mg(2+).

Belongs to the D-alanine--D-alanine ligase family. It depends on Mg(2+) as a cofactor. Requires Mn(2+) as cofactor.

It is found in the cytoplasm. It catalyses the reaction 2 D-alanine + ATP = D-alanyl-D-alanine + ADP + phosphate + H(+). The protein operates within cell wall biogenesis; peptidoglycan biosynthesis. Cell wall formation. This Granulibacter bethesdensis (strain ATCC BAA-1260 / CGDNIH1) protein is D-alanine--D-alanine ligase.